The following is a 637-amino-acid chain: tRNA-dihydrouridine(47) synthase [NAD(P)(+)]-like (637 aa).

3 disordered regions span residues 1-21 (MAET…ACER), 41-63 (LDGD…EPGA), and 85-105 (ERQV…VKPA). Basic residues predominate over residues 89-104 (PKRARGQNKSRPHVKP). 2 consecutive C3H1-type zinc fingers follow at residues 107 to 137 (YDKD…HDVG) and 145 to 175 (ADLG…HLGP). Position 260 is a phosphothreonine (Thr-260). Ser-263 and Ser-264 each carry phosphoserine. Residues 298–300 (PLT) and Gln-352 contribute to the FMN site. Cys-383 (proton donor) is an active-site residue. Residue Lys-403 forms a Glycyl lysine isopeptide (Lys-Gly) (interchain with G-Cter in SUMO2) linkage. Residues Lys-422, His-452, 484–486 (NGD), and 507–508 (AR) contribute to the FMN site.

This sequence belongs to the Dus family. Dus3 subfamily. FMN is required as a cofactor.

The catalysed reaction is 5,6-dihydrouridine(47) in tRNA + NAD(+) = uridine(47) in tRNA + NADH + H(+). The enzyme catalyses 5,6-dihydrouridine(47) in tRNA + NADP(+) = uridine(47) in tRNA + NADPH + H(+). It catalyses the reaction a 5,6-dihydrouridine in mRNA + NAD(+) = a uridine in mRNA + NADH + H(+). It carries out the reaction a 5,6-dihydrouridine in mRNA + NADP(+) = a uridine in mRNA + NADPH + H(+). Catalyzes the synthesis of dihydrouridine, a modified base, in various RNAs, such as tRNAs, mRNAs and some long non-coding RNAs (lncRNAs). Mainly modifies the uridine in position 47 (U47) in the D-loop of most cytoplasmic tRNAs. Also able to mediate the formation of dihydrouridine in some mRNAs, thereby regulating their translation. This Mus musculus (Mouse) protein is tRNA-dihydrouridine(47) synthase [NAD(P)(+)]-like.